The sequence spans 230 residues: uncharacterized protein (230 aa).

This is an uncharacterized protein from Aquifex aeolicus (strain VF5).